Consider the following 327-residue polypeptide: Undecaprenyl-phosphate 4-deoxy-4-formamido-L-arabinose transferase (327 aa).

2 consecutive transmembrane segments (helical) span residues 236-256 (LSLV…LLVV) and 270-290 (VFTL…GMGL).

This sequence belongs to the glycosyltransferase 2 family.

It localises to the cell inner membrane. The enzyme catalyses UDP-4-deoxy-4-formamido-beta-L-arabinose + di-trans,octa-cis-undecaprenyl phosphate = 4-deoxy-4-formamido-alpha-L-arabinopyranosyl di-trans,octa-cis-undecaprenyl phosphate + UDP. It functions in the pathway glycolipid biosynthesis; 4-amino-4-deoxy-alpha-L-arabinose undecaprenyl phosphate biosynthesis; 4-amino-4-deoxy-alpha-L-arabinose undecaprenyl phosphate from UDP-4-deoxy-4-formamido-beta-L-arabinose and undecaprenyl phosphate: step 1/2. It participates in bacterial outer membrane biogenesis; lipopolysaccharide biosynthesis. Catalyzes the transfer of 4-deoxy-4-formamido-L-arabinose from UDP to undecaprenyl phosphate. The modified arabinose is attached to lipid A and is required for resistance to polymyxin and cationic antimicrobial peptides. The polypeptide is Undecaprenyl-phosphate 4-deoxy-4-formamido-L-arabinose transferase (Yersinia enterocolitica serotype O:8 / biotype 1B (strain NCTC 13174 / 8081)).